We begin with the raw amino-acid sequence, 417 residues long: Serine hydroxymethyltransferase (417 aa).

Residues L112 and G116–L118 each bind (6S)-5,6,7,8-tetrahydrofolate. K221 carries the N6-(pyridoxal phosphate)lysine modification. E247 provides a ligand contact to (6S)-5,6,7,8-tetrahydrofolate.

This sequence belongs to the SHMT family. Homodimer. Pyridoxal 5'-phosphate serves as cofactor.

It is found in the cytoplasm. The enzyme catalyses (6R)-5,10-methylene-5,6,7,8-tetrahydrofolate + glycine + H2O = (6S)-5,6,7,8-tetrahydrofolate + L-serine. Its pathway is one-carbon metabolism; tetrahydrofolate interconversion. It functions in the pathway amino-acid biosynthesis; glycine biosynthesis; glycine from L-serine: step 1/1. In terms of biological role, catalyzes the reversible interconversion of serine and glycine with tetrahydrofolate (THF) serving as the one-carbon carrier. This reaction serves as the major source of one-carbon groups required for the biosynthesis of purines, thymidylate, methionine, and other important biomolecules. Also exhibits THF-independent aldolase activity toward beta-hydroxyamino acids, producing glycine and aldehydes, via a retro-aldol mechanism. The sequence is that of Serine hydroxymethyltransferase from Borrelia recurrentis (strain A1).